A 246-amino-acid chain; its full sequence is Peptide methionine sulfoxide reductase (246 aa).

The active-site Cysteine sulfenic acid (-SOH) intermediate is Cys48. Cys48 and Cys246 are disulfide-bonded.

Post-translationally, conjugated to URM1, a ubiquitin-like protein.

It carries out the reaction L-methionyl-[protein] + [thioredoxin]-disulfide + H2O = L-methionyl-(S)-S-oxide-[protein] + [thioredoxin]-dithiol. It catalyses the reaction [thioredoxin]-disulfide + L-methionine + H2O = L-methionine (S)-S-oxide + [thioredoxin]-dithiol. Functionally, has an important function as a repair enzyme for proteins that have been inactivated by oxidation. Catalyzes the reduction of methionine sulfoxide in proteins to methionine. Does not catalyze the reverse reaction involving the oxidation of methionine residues. The chain is Peptide methionine sulfoxide reductase from Drosophila melanogaster (Fruit fly).